A 435-amino-acid polypeptide reads, in one-letter code: Glutamine synthetase (435 aa).

Residues 12–94 form the GS beta-grasp domain; the sequence is KSIKYFMISY…VAADCVMDDR (83 aa). Residues 100-435 enclose the GS catalytic domain; sequence PRVVLKRLVA…QWERDSTLDI (336 aa). Glu-123, Glu-125, Glu-180, and Glu-187 together coordinate Mg(2+). Gly-232 is an L-glutamate binding site. His-236 contributes to the Mg(2+) binding site. Ser-240 contacts ATP. L-glutamate contacts are provided by Arg-291 and Arg-315. Residues Arg-315 and Arg-320 each coordinate ATP. Glu-328 contributes to the Mg(2+) binding site. Residue Arg-330 participates in L-glutamate binding.

It belongs to the glutamine synthetase family. As to quaternary structure, homooctamer. Requires Mg(2+) as cofactor.

It catalyses the reaction L-glutamate + NH4(+) + ATP = L-glutamine + ADP + phosphate + H(+). Its function is as follows. Catalyzes the ATP-dependent biosynthesis of glutamine from glutamate and ammonia. In Rhizobium leguminosarum bv. phaseoli, this protein is Glutamine synthetase.